A 132-amino-acid chain; its full sequence is Agouti-signaling protein (132 aa).

A signal peptide spans Met1–Ser22. A glycan (N-linked (GlcNAc...) asparagine) is linked at Asn39. Residues Lys60–Pro88 form a disordered region. Basic and acidic residues predominate over residues Ser63–Met79. Disulfide bonds link Cys93/Cys108, Cys100/Cys114, Cys107/Cys125, Cys111/Cys132, and Cys116/Cys123. An Agouti domain is found at Cys93–Cys132.

The protein resides in the secreted. Functionally, involved in the regulation of melanogenesis. The binding of ASP to MC1R precludes alpha-MSH initiated signaling and thus blocks production of cAMP, leading to a down-regulation of eumelanogenesis (brown/black pigment) and thus increasing synthesis of pheomelanin (yellow/red pigment). This chain is Agouti-signaling protein (ASIP), found in Macaca cyclopis (Taiwan macaque).